Reading from the N-terminus, the 422-residue chain is 5'-deoxyadenosine deaminase (422 aa).

2 residues coordinate Zn(2+): histidine 57 and histidine 59. Substrate-binding residues include glutamate 86 and histidine 178. Histidine 205 serves as a coordination point for Zn(2+). Glutamate 208 and aspartate 294 together coordinate substrate. Residue aspartate 294 participates in Zn(2+) binding.

Belongs to the metallo-dependent hydrolases superfamily. MTA/SAH deaminase family. As to quaternary structure, homotetramer. It depends on Zn(2+) as a cofactor.

It carries out the reaction 5'-deoxyadenosine + H2O + H(+) = 5'-deoxyinosine + NH4(+). The enzyme catalyses S-adenosyl-L-homocysteine + H2O + H(+) = S-inosyl-L-homocysteine + NH4(+). It catalyses the reaction S-methyl-5'-thioadenosine + H2O + H(+) = S-methyl-5'-thioinosine + NH4(+). The catalysed reaction is adenosine + H2O + H(+) = inosine + NH4(+). It participates in amino-acid biosynthesis; S-adenosyl-L-methionine biosynthesis. Its function is as follows. Catalyzes the deamination of three SAM-derived enzymatic products, namely 5'-deoxyadenosine, S-adenosyl-L-homocysteine, and 5'-methylthioadenosine, to produce the inosine analogs. Can also deaminate adenosine. The preferred substrate for this enzyme is 5'-deoxyadenosine, but all these substrates are efficiently deaminated. Likely functions in a S-adenosyl-L-methionine (SAM) recycling pathway from S-adenosyl-L-homocysteine (SAH) produced from SAM-dependent methylation reactions. May also be involved in the recycling of 5'-deoxyadenosine, whereupon the 5'-deoxyribose moiety of 5'-deoxyinosine is further metabolized to deoxyhexoses used for the biosynthesis of aromatic amino acids in methanogens. The chain is 5'-deoxyadenosine deaminase from Methanococcus maripaludis (strain C5 / ATCC BAA-1333).